The sequence spans 354 residues: Polyribonucleotide 5'-hydroxyl-kinase PYRAB01840 (354 aa).

Residue 36 to 43 (GDVDTGKT) coordinates ATP.

The cofactor is a divalent metal cation.

The enzyme catalyses a 5'-end dephospho-2'-deoxyribonucleoside-DNA + ATP = a 5'-end 5'-phospho-2'-deoxyribonucleoside-DNA + ADP + H(+). It catalyses the reaction a 5'-end dephospho-ribonucleoside-RNA + ATP = a 5'-end 5'-phospho-ribonucleoside-RNA + ADP + H(+). Polynucleotide kinase that can phosphorylate the 5'-hydroxyl groups of both single-stranded RNA (ssRNA) and single-stranded DNA (ssDNA). Exhibits a strong preference for ssRNA. The sequence is that of Polyribonucleotide 5'-hydroxyl-kinase PYRAB01840 from Pyrococcus abyssi (strain GE5 / Orsay).